Consider the following 279-residue polypeptide: MGFADQRFNVNLSILFTELPLLERPAAAAAAGFTAVELWWPWIDSPTPEQSELDALKSAIEDAGVQLTGLNFYAGQLPGPDRGALSIPGEESERFRANIDVAADFARSLGCTALNALYGNRVEGVDPAEQDRLALENLVLAARAADRIGAVLLVEALNKPESPRYPLVSAPAAIAVVDRVNEATGLGNAKFLMDLYHLSMNGEDLPQVIDAYAAKTGHVQIADNPGRGAPGTGSLPLEDLLDRLAKAGYDGWVGLEYKPGDDPSAQSFSWLPAGARAAR.

Active-site proton donor/acceptor residues include glutamate 155 and glutamate 256. A disordered region spans residues 260–279 (GDDPSAQSFSWLPAGARAAR).

This sequence belongs to the hyi family.

The catalysed reaction is 3-hydroxypyruvate = 2-hydroxy-3-oxopropanoate. Catalyzes the reversible isomerization between hydroxypyruvate and 2-hydroxy-3-oxopropanoate (also termed tartronate semialdehyde). In Streptomyces coelicolor (strain ATCC BAA-471 / A3(2) / M145), this protein is Putative hydroxypyruvate isomerase.